We begin with the raw amino-acid sequence, 930 residues long: Inter-alpha-trypsin inhibitor heavy chain H4 (930 aa).

The N-terminal stretch at Met1–Ala28 is a signal peptide. In terms of domain architecture, VIT spans Glu29 to Glu148. Asn81 and Asn207 each carry an N-linked (GlcNAc...) asparagine glycan. The VWFA domain maps to Pro272–Asp432. An N-linked (GlcNAc...) asparagine; atypical glycan is attached at Asn274. Asn517 and Asn577 each carry an N-linked (GlcNAc...) asparagine glycan. Residues Lys595–Val618 are disordered. The segment at Met658 to Arg688 is proline-rich (PRR) potential bioactive peptide. Residues Pro662–Arg688 constitute a propeptide, potentially active peptide. O-linked (GalNAc...) threonine glycans are attached at residues Thr719, Thr720, and Thr722. An O-glycosylated at three sites region spans residues Thr719–Thr725. A disulfide bridge connects residues Cys747 and Cys925.

It belongs to the ITIH family. Interacts (via C-terminus) with DNAJC1 (via SANT 2 domain); this interaction protects ITIH4 against cleavage by kallikrein in vitro. In terms of processing, cleaved by plasma kallikrein to yield 100 kDa and 35 kDa fragments, and the resulting 100 kDa fragment is further converted to a 70 kDa fragment. Post-translationally, N- and O-glycosylated. In urine, O-linked glycosylation on threonine residues in the region from Thr-719 to Thr-725 consists of core 1 or possibly core 8 glycans. Mainly Hex(HexNAc)(2), but also some Hex(3)(HexNAc)(3). N-glycosylated but not O-glycosylated in plasma. Liver specific.

Its subcellular location is the secreted. Functionally, type II acute-phase protein (APP) involved in inflammatory responses to trauma. May also play a role in liver development or regeneration. This chain is Inter-alpha-trypsin inhibitor heavy chain H4 (ITIH4), found in Homo sapiens (Human).